The primary structure comprises 50 residues: Ornatin-E (50 aa).

A Cell attachment site motif is present at residues 42 to 44; the sequence is RGD.

It belongs to the ornatin family.

Its subcellular location is the secreted. Functionally, potent inhibitor of fibrinogen interaction with platelet receptors expressed on glycoprotein IIb-IIIa complex. May prevent blood from clotting during either feeding and/or storage of ingested blood. This is Ornatin-E from Placobdella ornata (Turtle leech).